The chain runs to 1438 residues: DNA polymerase III PolC-type (1438 aa).

Residues 422–578 enclose the Exonuclease domain; it reads YVVFDVETTG…YDTEATAYIF (157 aa).

The protein belongs to the DNA polymerase type-C family. PolC subfamily.

Its subcellular location is the cytoplasm. The enzyme catalyses DNA(n) + a 2'-deoxyribonucleoside 5'-triphosphate = DNA(n+1) + diphosphate. Required for replicative DNA synthesis. This DNA polymerase also exhibits 3' to 5' exonuclease activity. The protein is DNA polymerase III PolC-type of Staphylococcus epidermidis (strain ATCC 35984 / DSM 28319 / BCRC 17069 / CCUG 31568 / BM 3577 / RP62A).